The sequence spans 803 residues: Volume-regulated anion channel subunit LRRC8C (803 aa).

The Cytoplasmic portion of the chain corresponds to methionine 1–proline 22. Residues tryptophan 23–valine 47 form a helical membrane-spanning segment. Residues methionine 48–alanine 124 lie on the Extracellular side of the membrane. Disulfide bonds link cysteine 54/cysteine 308 and cysteine 115/cysteine 293. N-linked (GlcNAc...) asparagine glycosylation is found at asparagine 64 and asparagine 70. The chain crosses the membrane as a helical span at residues lysine 125 to phenylalanine 144. Topologically, residues tryptophan 145–tyrosine 262 are cytoplasmic. The interval glutamate 177 to asparagine 209 is disordered. Positions asparagine 191 to asparagine 209 are enriched in polar residues. Phosphoserine is present on residues serine 212 and serine 215. The chain crosses the membrane as a helical span at residues valine 263–valine 284. The Extracellular segment spans residues serine 285–histidine 314. The chain crosses the membrane as a helical span at residues leucine 315 to tyrosine 339. Residues tryptophan 340–glutamate 803 lie on the Cytoplasmic side of the membrane. LRR repeat units follow at residues glutamate 397–threonine 420, asparagine 421–isoleucine 443, leucine 446–leucine 466, aspartate 467–phenylalanine 488, lysine 490–leucine 513, asparagine 515–serine 537, leucine 541–valine 563, serine 565–lysine 587, methionine 588–leucine 611, serine 613–histidine 635, leucine 636–leucine 659, threonine 660–cysteine 682, lysine 684–leucine 705, glutamine 706–cysteine 728, lysine 730–leucine 751, phenylalanine 753–cysteine 774, and alanine 776–glutamine 799.

The protein belongs to the LRRC8 family. As to quaternary structure, heterohexamer; oligomerizes with other LRRC8 proteins (LRRC8A, LRRC8B, LRRC8D and/or LRRC8E) to form a heterohexamer. Homoheptamer; inactive, likely because it is not targeted to the plasma membrane in the absence of LRRC8A. In vivo, the subunit composition may depend primarily on expression levels, and heterooligomeric channels containing various proportions of the different LRRC8 proteins may coexist. As to expression, expressed at highest levels in skeletal muscle, and at moderate levels in heart, lung and peripheral blood leukocytes.

The protein resides in the cell membrane. It is found in the endoplasmic reticulum membrane. It catalyses the reaction chloride(in) = chloride(out). The enzyme catalyses iodide(out) = iodide(in). The catalysed reaction is taurine(out) = taurine(in). It carries out the reaction 2',3'-cGAMP(out) = 2',3'-cGAMP(in). Functionally, non-essential component of the volume-regulated anion channel (VRAC, also named VSOAC channel), an anion channel required to maintain a constant cell volume in response to extracellular or intracellular osmotic changes. The VRAC channel conducts iodide better than chloride and can also conduct organic osmolytes like taurine. Plays a redundant role in the efflux of amino acids, such as aspartate and glutamate, in response to osmotic stress. The VRAC channel also mediates transport of immunoreactive cyclic dinucleotide GMP-AMP (2'-3'-cGAMP), an immune messenger produced in response to DNA virus in the cytosol. Channel activity requires LRRC8A plus at least one other family member (LRRC8B, LRRC8C, LRRC8D or LRRC8E); channel characteristics depend on the precise subunit composition. The chain is Volume-regulated anion channel subunit LRRC8C from Homo sapiens (Human).